The following is a 354-amino-acid chain: Alkanal monooxygenase alpha chain (354 aa).

It belongs to the bacterial luciferase oxidoreductase family. Heterodimer of an alpha and a beta chain.

It carries out the reaction a long-chain fatty aldehyde + FMNH2 + O2 = a long-chain fatty acid + hnu + FMN + H2O + 2 H(+). Functionally, light-emitting reaction in luminous bacteria. The sequence is that of Alkanal monooxygenase alpha chain (luxA) from Aliivibrio fischeri (Vibrio fischeri).